The sequence spans 527 residues: MEKYLEDELPGDRVECLRQVEFEKDCWGETGMQLPCRLNKPVKPSVLDAQSLGVSLIAFRTLSSVKHTSRLCMTGRLGLKKGCLLVEEVGVCIPLFEPGDQVGQLRSTQTTSKRKAASRKGQREQRVNARLQEERRKDMAFAESIWTFMPGKKGSVVQGPNTRTLTNAHDGILDDINCAQIAGKHVGDHSNCANVIKAGVISLLGKLVQYPERPGEPFCRYYMKFGECKHMTFCKYNHPKDRFSCKTTNTIRSESLCLHDQQTTILENQFGLPSLVDKATANTTNLVASASSSMTPDEIGEGKNNPDEVFVCICGEKLLFHTNFNTTAVKELVVFALQRRNIKYCDIYVTWLIPMEYERMDELIDRAVRDNNNDLFYYVNLPPELINPYKDTWVTFLSDFSRYIIHQLLQYLNDTFGDPPSWIADISWVPDMWKTYNYSPNNNSTLWTPRYTLDLNSCSHFARNFLNHFGREVSLQAAEAAVSQNLEFLLPTIMMLMPVYSGPHHWNNDFMEILLNTNSDRSNGQIS.

Residues glycine 103–valine 127 are disordered. The C3H1-type zinc-finger motif lies at arginine 213–aspartate 241.

This chain is Putative zinc finger CCCH domain-containing protein 64, found in Oryza sativa subsp. japonica (Rice).